The chain runs to 170 residues: Interferon gamma (170 aa).

A signal peptide spans 1–20; it reads MNSRLCIMALLLCFSQALLG. Residues Asn-36 and Asn-103 are each glycosylated (N-linked (GlcNAc...) asparagine).

The protein belongs to the type II (or gamma) interferon family. In terms of assembly, homodimer. Interacts with IFNGR1 (via extracellular domain); this interaction promotes IFNGR1 dimerization. As to expression, released primarily from activated T lymphocytes.

It localises to the secreted. Its function is as follows. Type II interferon produced by immune cells such as T-cells and NK cells that plays crucial roles in antimicrobial, antiviral, and antitumor responses by activating effector immune cells and enhancing antigen presentation. Primarily signals through the JAK-STAT pathway after interaction with its receptor IFNGR1 to affect gene regulation. Upon IFNG binding, IFNGR1 intracellular domain opens out to allow association of downstream signaling components JAK2, JAK1 and STAT1, leading to STAT1 activation, nuclear translocation and transcription of IFNG-regulated genes. Many of the induced genes are transcription factors such as IRF1 that are able to further drive regulation of a next wave of transcription. Plays a role in class I antigen presentation pathway by inducing a replacement of catalytic proteasome subunits with immunoproteasome subunits. In turn, increases the quantity, quality, and repertoire of peptides for class I MHC loading. Increases the efficiency of peptide generation also by inducing the expression of activator PA28 that associates with the proteasome and alters its proteolytic cleavage preference. Up-regulates as well MHC II complexes on the cell surface by promoting expression of several key molecules such as cathepsins B/CTSB, H/CTSH, and L/CTSL. Participates in the regulation of hematopoietic stem cells during development and under homeostatic conditions by affecting their development, quiescence, and differentiation. The polypeptide is Interferon gamma (IFNG) (Sigmodon hispidus (Hispid cotton rat)).